A 173-amino-acid polypeptide reads, in one-letter code: Photosystem I reaction center subunit XI (173 aa).

The next 2 membrane-spanning stretches (helical) occupy residues 92-112 (LAGL…LSLY) and 148-168 (LIGG…LGII).

Belongs to the PsaL family.

It is found in the cellular thylakoid membrane. This chain is Photosystem I reaction center subunit XI, found in Nostoc punctiforme (strain ATCC 29133 / PCC 73102).